The sequence spans 198 residues: Phycocyanobilin lyase CpcT homolog (198 aa).

Belongs to the CpcT/CpeT biliprotein lyase family.

Functionally, covalently attaches a chromophore to Cys residue(s) of phycobiliproteins. In vitro is not seen to act as a chromophore lyase for ApcA1, ApcA2, ApcB, ApcD, ApcF, CpcB or PecB, the lyase activity is therefore unsure. This is Phycocyanobilin lyase CpcT homolog (cpcT2) from Nostoc sp. (strain PCC 7120 / SAG 25.82 / UTEX 2576).